The sequence spans 47 residues: Defensin Ec-AMP-D1 (47 aa).

Disulfide bonds link Cys-3–Cys-47, Cys-14–Cys-34, Cys-20–Cys-41, and Cys-24–Cys-43.

In terms of biological role, has antifungal activity. Inhibits spore germination in F.graminearum (IC(50)=15 ug/ml), F.oxysporum (IC(50)=102 ug/ml), F.verticillioides (IC(50)=8.5 ug/ml) and D.maydis (IC(50)=12.5 ug/ml), but not in C.graminicola, B.cinerea and H.sativum at concentrations below 30 ug/ml. Inhibits hyphal development in P.infestans (IC(50)=25.5 ug/ml), but not release of zoospores. At concentrations above 100 ug/ml, induces morphological changes such as lysis of hyphae and sporangia in P.infestans. In Echinochloa crus-galli (Barnyard grass), this protein is Defensin Ec-AMP-D1.